A 505-amino-acid polypeptide reads, in one-letter code: L-carnitine/gamma-butyrobetaine antiporter (505 aa).

12 helical membrane-spanning segments follow: residues 10–30 (IEPKVFFPPLIIVGILCWLTV), 51–71 (WGWAFEWYMIVMLFGWFWLVF), 92–112 (IFMMFASCTSAAVLFWGSIEI), 143–163 (GPLPWATYSFLSVAFAYFFFV), 195–215 (FYLVALIFAMGTSLGLATPLV), 231–251 (LDAIIITCWIILNAICVACGL), 263–283 (SYLSFLMLGWVFIVSGASFIM), 316–336 (WTVFYWAWWVIYAIQMSIFLA), 347–367 (LCFGMVMGLTASTWILWTVLG), 403–423 (LSTATMWGFFILCFIATVTLI), 446–466 (LLVRIGWSVLVGIIGIVLLAL), and 475–495 (AIIAGGCPLFFVNIMVTLSFI).

This sequence belongs to the BCCT transporter (TC 2.A.15) family. CaiT subfamily. Homotrimer.

The protein localises to the cell inner membrane. The catalysed reaction is 4-(trimethylamino)butanoate(in) + (R)-carnitine(out) = 4-(trimethylamino)butanoate(out) + (R)-carnitine(in). The protein operates within amine and polyamine metabolism; carnitine metabolism. In terms of biological role, catalyzes the exchange of L-carnitine for gamma-butyrobetaine. The sequence is that of L-carnitine/gamma-butyrobetaine antiporter from Salmonella paratyphi A (strain ATCC 9150 / SARB42).